The sequence spans 224 residues: dTTP/UTP pyrophosphatase (224 aa).

The active-site Proton acceptor is the Asp77.

This sequence belongs to the Maf family. YhdE subfamily. It depends on a divalent metal cation as a cofactor.

Its subcellular location is the cytoplasm. The enzyme catalyses dTTP + H2O = dTMP + diphosphate + H(+). It carries out the reaction UTP + H2O = UMP + diphosphate + H(+). Its function is as follows. Nucleoside triphosphate pyrophosphatase that hydrolyzes dTTP and UTP. May have a dual role in cell division arrest and in preventing the incorporation of modified nucleotides into cellular nucleic acids. This Dehalococcoides mccartyi (strain CBDB1) protein is dTTP/UTP pyrophosphatase.